The primary structure comprises 122 residues: Autophagy-related protein 8e (122 aa).

G118 is lipidated: Phosphatidylethanolamine amidated glycine. A propeptide spans 119-122 (ASSI) (removed in mature form).

The protein belongs to the ATG8 family. Interacts with ATG4. Interacts with SH3P2. Interacts with ATG1A and ATG11. Binds to ATG1A and ATG11 on autophagic vesicles. In terms of processing, the C-terminal 4 residues are removed by ATG4 to expose Gly-118 at the C-terminus. This Gly-118 forms then a thioester bond with the 'Cys-558' of ATG7 (E1-like activating enzyme) before being transferred to the 'Cys-258' of ATG3 (the specific E2 conjugating enzyme), in order to be finally amidated with phosphatidylethanolamine. This lipid modification anchors ATG8 to autophagosomes. Constitutively expressed.

It localises to the cytoplasmic vesicle. The protein resides in the autophagosome membrane. It is found in the vacuole membrane. The protein localises to the cytoplasm. Its subcellular location is the cytoskeleton. Its function is as follows. Ubiquitin-like modifier involved in autophagosomes formation. May mediate the delivery of the autophagosomes to the vacuole via the microtubule cytoskeleton. In Arabidopsis thaliana (Mouse-ear cress), this protein is Autophagy-related protein 8e (ATG8E).